A 625-amino-acid polypeptide reads, in one-letter code: DNA-directed RNA polymerase subunit gamma (625 aa).

Residues Cys-71, Cys-73, Cys-86, and Cys-89 each contribute to the Zn(2+) site. Asp-467, Asp-469, and Asp-471 together coordinate Mg(2+).

This sequence belongs to the RNA polymerase beta' chain family. RpoC1 subfamily. In cyanobacteria the RNAP catalytic core is composed of 2 alpha, 1 beta, 1 beta', 1 gamma and 1 omega subunit. When a sigma factor is associated with the core the holoenzyme is formed, which can initiate transcription. Requires Mg(2+) as cofactor. Zn(2+) is required as a cofactor.

It catalyses the reaction RNA(n) + a ribonucleoside 5'-triphosphate = RNA(n+1) + diphosphate. In terms of biological role, DNA-dependent RNA polymerase catalyzes the transcription of DNA into RNA using the four ribonucleoside triphosphates as substrates. This chain is DNA-directed RNA polymerase subunit gamma, found in Nostoc punctiforme (strain ATCC 29133 / PCC 73102).